A 242-amino-acid chain; its full sequence is 1-(5-phosphoribosyl)-5-[(5-phosphoribosylamino)methylideneamino] imidazole-4-carboxamide isomerase (242 aa).

Residue Asp-10 is the Proton acceptor of the active site. Asp-131 serves as the catalytic Proton donor.

It belongs to the HisA/HisF family.

The protein localises to the cytoplasm. It catalyses the reaction 1-(5-phospho-beta-D-ribosyl)-5-[(5-phospho-beta-D-ribosylamino)methylideneamino]imidazole-4-carboxamide = 5-[(5-phospho-1-deoxy-D-ribulos-1-ylimino)methylamino]-1-(5-phospho-beta-D-ribosyl)imidazole-4-carboxamide. The protein operates within amino-acid biosynthesis; L-histidine biosynthesis; L-histidine from 5-phospho-alpha-D-ribose 1-diphosphate: step 4/9. This chain is 1-(5-phosphoribosyl)-5-[(5-phosphoribosylamino)methylideneamino] imidazole-4-carboxamide isomerase, found in Bifidobacterium animalis subsp. lactis (strain AD011).